The following is a 668-amino-acid chain: Pentatricopeptide repeat-containing protein CRP1, chloroplastic (668 aa).

Residues 1 to 64 (MPASLLPPTF…SASLTSPSPP (64 aa)) constitute a chloroplast transit peptide. 14 PPR repeats span residues 154 to 188 (SPLL…DFLP), 189 to 226 (DLAS…RLEP), 227 to 261 (DAPL…GLTP), 262 to 297 (RSNA…EIKP), 298 to 332 (RTRA…GVAP), 333 to 367 (DEAT…GVKP), 368 to 402 (SSYV…GVRP), 403 to 437 (DRHF…GIEP), 438 to 472 (DVVT…NCPP), 473 to 507 (GTTT…GLVP), 508 to 542 (NIIT…GLKP), 543 to 577 (SPTM…GLEV), 578 to 612 (SILV…GLRP), and 613 to 647 (DVIT…GCAP).

Belongs to the PPR family. P subfamily. Component of a multisubunit complex.

The protein resides in the plastid. It localises to the chloroplast stroma. In terms of biological role, required for the translation of the chloroplast petA and petD mRNAs. Required for the processing of the petD mRNA from a polycistronic precursor. Binds with high affinity to the 5'-UTR of the chloroplastic petA transcript. Activates psaC and petA translation by binding their 5'-UTRs. This Zea mays (Maize) protein is Pentatricopeptide repeat-containing protein CRP1, chloroplastic.